A 100-amino-acid chain; its full sequence is MVPTSYYILLSALLFTLGVVGVITRRNALVLFMSVELMLNSANLALVTFAMARQDVAGQIVVFFVIVVAAAEVAVGLALLVAIFRTKHTTDVDEINALRG.

Helical transmembrane passes span 3–23, 29–49, and 60–80; these read PTSY…VGVI, LVLF…LVTF, and IVVF…LALL.

This sequence belongs to the complex I subunit 4L family. As to quaternary structure, NDH-1 is composed of 14 different subunits. Subunits NuoA, H, J, K, L, M, N constitute the membrane sector of the complex.

Its subcellular location is the cell membrane. The catalysed reaction is a quinone + NADH + 5 H(+)(in) = a quinol + NAD(+) + 4 H(+)(out). Functionally, NDH-1 shuttles electrons from NADH, via FMN and iron-sulfur (Fe-S) centers, to quinones in the respiratory chain. The immediate electron acceptor for the enzyme in this species is believed to be ubiquinone. Couples the redox reaction to proton translocation (for every two electrons transferred, four hydrogen ions are translocated across the cytoplasmic membrane), and thus conserves the redox energy in a proton gradient. The chain is NADH-quinone oxidoreductase subunit K from Roseiflexus castenholzii (strain DSM 13941 / HLO8).